Reading from the N-terminus, the 379-residue chain is uncharacterized protein (379 aa).

Disordered stretches follow at residues 1-20 (MLPQ…PVGP), 227-290 (VSQR…LQGH), and 331-371 (PGCA…RAGH). Over residues 7-20 (QVVHGVQDGPPVGP) the composition is skewed to low complexity. The span at 249 to 261 (GCKDPRVRKEPGR) shows a compositional bias: basic and acidic residues.

This is an uncharacterized protein from Dryophytes versicolor (chameleon treefrog).